The sequence spans 129 residues: Small ribosomal subunit protein uS11 (129 aa).

This sequence belongs to the universal ribosomal protein uS11 family. In terms of assembly, part of the 30S ribosomal subunit. Interacts with proteins S7 and S18. Binds to IF-3.

Located on the platform of the 30S subunit, it bridges several disparate RNA helices of the 16S rRNA. Forms part of the Shine-Dalgarno cleft in the 70S ribosome. This is Small ribosomal subunit protein uS11 from Pelotomaculum thermopropionicum (strain DSM 13744 / JCM 10971 / SI).